The following is a 415-amino-acid chain: Serine hydroxymethyltransferase (415 aa).

(6S)-5,6,7,8-tetrahydrofolate is bound by residues Leu117 and 121 to 123 (GHL). Lys226 is modified (N6-(pyridoxal phosphate)lysine). A (6S)-5,6,7,8-tetrahydrofolate-binding site is contributed by Glu241.

The protein belongs to the SHMT family. As to quaternary structure, homodimer. The cofactor is pyridoxal 5'-phosphate.

It localises to the cytoplasm. The enzyme catalyses (6R)-5,10-methylene-5,6,7,8-tetrahydrofolate + glycine + H2O = (6S)-5,6,7,8-tetrahydrofolate + L-serine. Its pathway is one-carbon metabolism; tetrahydrofolate interconversion. It participates in amino-acid biosynthesis; glycine biosynthesis; glycine from L-serine: step 1/1. In terms of biological role, catalyzes the reversible interconversion of serine and glycine with tetrahydrofolate (THF) serving as the one-carbon carrier. This reaction serves as the major source of one-carbon groups required for the biosynthesis of purines, thymidylate, methionine, and other important biomolecules. Also exhibits THF-independent aldolase activity toward beta-hydroxyamino acids, producing glycine and aldehydes, via a retro-aldol mechanism. This Bacillus velezensis (strain DSM 23117 / BGSC 10A6 / LMG 26770 / FZB42) (Bacillus amyloliquefaciens subsp. plantarum) protein is Serine hydroxymethyltransferase.